The following is a 252-amino-acid chain: Transcriptional regulatory protein HptR (252 aa).

A Response regulatory domain is found at 3-118 (KVVICDDERI…QLEVILGRLV (116 aa)). Position 55 is a 4-aspartylphosphate (Asp-55). Residues 153-250 (NQIVDQIKQS…QMSPSDYCKQ (98 aa)) enclose the HTH araC/xylS-type domain. 2 DNA-binding regions (H-T-H motif) span residues 170 to 191 (SDLI…KDHV) and 217 to 240 (HYEI…KKYL).

In terms of processing, phosphorylated by HptS.

It is found in the cytoplasm. Its function is as follows. Member of the two-component regulatory system HptS/HptR that regulates genes involved in hexose phosphate transport system in response to changes in extracellular phosphate sources. Activates uhpT expression to facilitate glucose-6-phosphate/G6P utilization by directly binding to its promoter. Antagonizes CcpA-dependent transcription of a subset of CcpA-regulated genes involved in antibiotic susceptibility. This is Transcriptional regulatory protein HptR (hptR) from Staphylococcus aureus (strain NCTC 8325 / PS 47).